The primary structure comprises 537 residues: Phosphoenolpyruvate carboxykinase (ATP) (537 aa).

Residues R64, Y204, and K210 each coordinate substrate. ATP contacts are provided by residues K210, H229, and 245–253; that span reads GLSGTGKTT. Positions 210 and 229 each coordinate Mn(2+). D266 contributes to the Mn(2+) binding site. ATP contacts are provided by residues E294, R330, 446–447, and T452; that span reads RI. R330 lines the substrate pocket.

The protein belongs to the phosphoenolpyruvate carboxykinase (ATP) family. Monomer. Mn(2+) is required as a cofactor.

The protein resides in the cytoplasm. The enzyme catalyses oxaloacetate + ATP = phosphoenolpyruvate + ADP + CO2. Its pathway is carbohydrate biosynthesis; gluconeogenesis. Its function is as follows. Involved in the gluconeogenesis. Catalyzes the conversion of oxaloacetate (OAA) to phosphoenolpyruvate (PEP) through direct phosphoryl transfer between the nucleoside triphosphate and OAA. The protein is Phosphoenolpyruvate carboxykinase (ATP) of Aliivibrio fischeri (strain ATCC 700601 / ES114) (Vibrio fischeri).